Consider the following 236-residue polypeptide: Probable pseudouridine-5'-phosphatase YKL033W-A (236 aa).

Belongs to the HAD-like hydrolase superfamily.

It catalyses the reaction XMP + H2O = xanthosine + phosphate. The enzyme catalyses psi-UMP + H2O = pseudouridine + phosphate. Functionally, nucleotidase with XMP as the best in vitro substrate. Low catalytic efficiencies of YKL033W-A observed with XMP and other substrates suggest that these could be secondary activities for this protein, and its primary substrate is not yet identified. May possess pseudouridine 5'-phosphatase activity and together with dTTP/UTP pyrophosphatase YOR111W might constitute a pathway for the detoxification of pseudouridine 5'-triphosphate (Psi-UTP) and -monophosphate (Psi-UMP). The chain is Probable pseudouridine-5'-phosphatase YKL033W-A from Saccharomyces cerevisiae (strain ATCC 204508 / S288c) (Baker's yeast).